The chain runs to 373 residues: T-protein (373 aa).

Residues 1 to 90 (MVAELTALRD…ESYTSENDKG (90 aa)) enclose the Chorismate mutase domain. The Prephenate/arogenate dehydrogenase domain occupies 99-361 (RPVVIVGGKG…DHAKRFLVES (263 aa)).

The protein in the C-terminal section; belongs to the prephenate/arogenate dehydrogenase family.

The protein localises to the cytoplasm. The enzyme catalyses chorismate = prephenate. The catalysed reaction is prephenate + NAD(+) = 3-(4-hydroxyphenyl)pyruvate + CO2 + NADH. Its pathway is amino-acid biosynthesis; L-tyrosine biosynthesis; (4-hydroxyphenyl)pyruvate from prephenate (NAD(+) route): step 1/1. The protein operates within metabolic intermediate biosynthesis; prephenate biosynthesis; prephenate from chorismate: step 1/1. This Enterobacter agglomerans (Erwinia herbicola) protein is T-protein (tyrA).